Here is a 216-residue protein sequence, read N- to C-terminus: Glycerol uptake facilitator protein-like 6 (216 aa).

2 helical membrane-spanning segments follow: residues 5-25 (LAEF…VVIA) and 30-50 (LAIG…FGGI). The short motif at 56–58 (NPA) is the NPA 1 element. Transmembrane regions (helical) follow at residues 72–92 (ADAI…SAAV), 114–134 (IGSG…LMVI), and 147–167 (FAGL…LNLT). The NPA 2 motif lies at 172-174 (NPA). The chain crosses the membrane as a helical span at residues 191 to 213 (LWVYILAPEVGAILAAFCARVMG).

The protein belongs to the MIP/aquaporin (TC 1.A.8) family.

Its subcellular location is the cell membrane. Probable transporter that facilitates the transmembrane diffusion of an unknown substrate. Is not permeable to water, dihydroxyacetone, glycerol, urea, H(2)O(2) and D/L-lactic acid. This chain is Glycerol uptake facilitator protein-like 6, found in Lactiplantibacillus plantarum (strain ATCC BAA-793 / NCIMB 8826 / WCFS1) (Lactobacillus plantarum).